The sequence spans 67 residues: Potassium channel toxin alpha-KTx (67 aa).

Positions 1–25 (MKNIAMKTTVVLTILLLSVLTAINA) are cleaved as a signal peptide. A propeptide spanning residues 26–31 (DTMKKR) is cleaved from the precursor. Disulfide bonds link Cys35–Cys54, Cys40–Cys59, Cys44–Cys61, and Cys49–Cys64.

The protein belongs to the short scorpion toxin superfamily. Potassium channel inhibitor family. As to expression, expressed by the venom gland.

It is found in the secreted. Functionally, blocks Kv1.1/KCNA1, Kv1.2/KCNA2 and Kv1.3/KCNA3 voltage-gated potassium channels. The sequence is that of Potassium channel toxin alpha-KTx from Hoffmannihadrurus gertschi (Scorpion).